The following is a 255-amino-acid chain: Tryptophan synthase alpha chain (255 aa).

Active-site proton acceptor residues include glutamate 44 and aspartate 55.

The protein belongs to the TrpA family. Tetramer of two alpha and two beta chains.

The enzyme catalyses (1S,2R)-1-C-(indol-3-yl)glycerol 3-phosphate + L-serine = D-glyceraldehyde 3-phosphate + L-tryptophan + H2O. It participates in amino-acid biosynthesis; L-tryptophan biosynthesis; L-tryptophan from chorismate: step 5/5. Functionally, the alpha subunit is responsible for the aldol cleavage of indoleglycerol phosphate to indole and glyceraldehyde 3-phosphate. The sequence is that of Tryptophan synthase alpha chain from Dehalococcoides mccartyi (strain ATCC BAA-2100 / JCM 16839 / KCTC 5957 / BAV1).